Consider the following 315-residue polypeptide: Homoserine kinase (315 aa).

96–106 (PHSRGLGSSAA) serves as a coordination point for ATP.

This sequence belongs to the GHMP kinase family. Homoserine kinase subfamily.

It is found in the cytoplasm. The catalysed reaction is L-homoserine + ATP = O-phospho-L-homoserine + ADP + H(+). It functions in the pathway amino-acid biosynthesis; L-threonine biosynthesis; L-threonine from L-aspartate: step 4/5. In terms of biological role, catalyzes the ATP-dependent phosphorylation of L-homoserine to L-homoserine phosphate. The sequence is that of Homoserine kinase from Mycobacterium leprae (strain Br4923).